We begin with the raw amino-acid sequence, 386 residues long: Short-chain dehydrogenase/reductase family 42E member 1 (386 aa).

Tyr-150 (proton acceptor) is an active-site residue. Lys-154 is an NAD(+) binding site. 2 helical membrane-spanning segments follow: residues 279–299 and 363–383; these read FPLS…FFIS and YLIW…SWLP.

The protein belongs to the 3-beta-HSD family.

It is found in the membrane. This is Short-chain dehydrogenase/reductase family 42E member 1 (sdr42e1) from Xenopus laevis (African clawed frog).